The chain runs to 559 residues: Berberine bridge enzyme-like A (559 aa).

An N-terminal signal peptide occupies residues 1 to 21 (MFPLIILISFSLASLSETATG). N-linked (GlcNAc...) asparagine glycans are attached at residues Asn-25 and Asn-37. A disulfide bridge connects residues Cys-29 and Cys-86. Residues 64–240 (FMPKPTFIIL…YAWKIRLLKV (177 aa)) form the FAD-binding PCMH-type domain. His-101 is modified (pros-8alpha-FAD histidine). Residues Asn-321, Asn-355, and Asn-494 are each glycosylated (N-linked (GlcNAc...) asparagine).

This sequence belongs to the oxygen-dependent FAD-linked oxidoreductase family. It depends on FAD as a cofactor. Mostly expressed in roots.

The protein localises to the vacuole. The protein operates within alkaloid biosynthesis; nicotine biosynthesis. In terms of biological role, involved in the biosynthesis of pyridine alkaloid natural products, leading mainly to the production of anabasine, anatabine, nicotine and nornicotine, effective deterrents against herbivores with antiparasitic and pesticide properties (neurotoxins); nornicotine serves as the precursor in the synthesis of the carcinogen compound N'-nitrosonornicotine (NNN). Catalyzes a late oxidation step subsequent to the pyridine ring condensation reaction in the biosynthesis of alkaloids. The polypeptide is Berberine bridge enzyme-like A (Nicotiana tabacum (Common tobacco)).